We begin with the raw amino-acid sequence, 420 residues long: Reticulon-4 receptor-like 2 (420 aa).

An N-terminal signal peptide occupies residues 1–30 (MLPGLRRLLQGPASACLLLTLLALPSVTPS). 2 disulfide bridges follow: Cys31/Cys37 and Cys35/Cys46. Residues 31-60 (CPMLCTCYSSPPTVSCQANNFSSVPLSLPP) enclose the LRRNT domain. Asn50 carries an N-linked (GlcNAc...) asparagine glycan. LRR repeat units lie at residues 61-82 (STQR…TFGP), 83-104 (NLLT…TFRH), 107-129 (ALEE…TFQG), 132-153 (RLQS…IFRG), 156-177 (SLQY…LFAD), 180-201 (NLSH…VFRG), 204-225 (SLDR…AFHG), and 228-249 (RLTI…ALAD). An N-linked (GlcNAc...) asparagine glycan is attached at Asn93. Asn236 is a glycosylation site (N-linked (GlcNAc...) asparagine). The 52-residue stretch at 261-312 (NPWACDCRARPLWAWFQRARVSSSDVTCATPPERQGRDLRALRDSDFQACPP) folds into the LRRCT domain. 2 cysteine pairs are disulfide-bonded: Cys265–Cys288 and Cys267–Cys310. A disordered region spans residues 286 to 399 (VTCATPPERQ…CQAPADSRGP (114 aa)). Over residues 294 to 306 (RQGRDLRALRDSD) the composition is skewed to basic and acidic residues. Residues 315–327 (PTRPGSRARGNSS) are important for interaction with MAG. Residues 351 to 360 (LPAEDSRGRQ) are compositionally biased toward basic and acidic residues. Residue Gly398 is the site of GPI-anchor amidated glycine attachment. Residues 399 to 420 (PALSAGLRTPLLCLLPLALHHL) constitute a propeptide, removed in mature form.

The protein belongs to the Nogo receptor family. In terms of assembly, interaction with MAG is controversial, and may be indirect. Interacts with MAG. Does not interact with OMG and RTN4. Post-translationally, undergoes zinc metalloproteinase-mediated ectodomain shedding in neuroblastoma cells; is released both as a full-length ectodomain and an N-terminal fragment containing the leucine-rich repeat (LRR) region of the protein. In terms of processing, N-glycosylated. As to expression, detected in brain. Detected in hippocampus neurons (at protein level).

The protein resides in the cell membrane. It localises to the membrane raft. The protein localises to the cell projection. Its subcellular location is the dendrite. It is found in the axon. The protein resides in the perikaryon. Functionally, cell surface receptor that plays a functionally redundant role in the inhibition of neurite outgrowth mediated by MAG. Plays a functionally redundant role in postnatal brain development. Contributes to normal axon migration across the brain midline and normal formation of the corpus callosum. Does not seem to play a significant role in regulating axon regeneration in the adult central nervous system. Protects motoneurons against apoptosis; protection against apoptosis is probably mediated by MAG. Like other family members, plays a role in restricting the number dendritic spines and the number of synapses that are formed during brain development. Signaling mediates activation of Rho and downstream reorganization of the actin cytoskeleton. The sequence is that of Reticulon-4 receptor-like 2 from Mus musculus (Mouse).